The sequence spans 66 residues: ATP synthase protein 8 (66 aa).

The chain crosses the membrane as a helical span at residues 8–24 (TWLMMIMSMFLALFIIF). K54 is subject to N6-acetyllysine; alternate. K54 is modified (N6-succinyllysine; alternate). K57 carries the N6-acetyllysine modification.

The protein belongs to the ATPase protein 8 family. In terms of assembly, F-type ATPases have 2 components, CF(1) - the catalytic core - and CF(0) - the membrane proton channel. Component of an ATP synthase complex composed of ATP5PB, ATP5MC1, ATP5F1E, ATP5PD, ATP5ME, ATP5PF, ATP5MF, MT-ATP6, MT-ATP8, ATP5F1A, ATP5F1B, ATP5F1D, ATP5F1C, ATP5PO, ATP5MG, ATP5MK and ATP5MJ. Interacts with PRICKLE3.

It is found in the mitochondrion membrane. Mitochondrial membrane ATP synthase (F(1)F(0) ATP synthase or Complex V) produces ATP from ADP in the presence of a proton gradient across the membrane which is generated by electron transport complexes of the respiratory chain. F-type ATPases consist of two structural domains, F(1) - containing the extramembraneous catalytic core and F(0) - containing the membrane proton channel, linked together by a central stalk and a peripheral stalk. During catalysis, ATP synthesis in the catalytic domain of F(1) is coupled via a rotary mechanism of the central stalk subunits to proton translocation. Part of the complex F(0) domain. Minor subunit located with subunit a in the membrane. The protein is ATP synthase protein 8 (MT-ATP8) of Cervus elaphus hippelaphus (European red deer).